The primary structure comprises 572 residues: Urease subunit alpha (572 aa).

The region spanning 134 to 572 is the Urease domain; that stretch reads AGIDSHIHLI…AAMNQRYFFG (439 aa). Ni(2+)-binding residues include His139, His141, and Lys222. Position 222 is an N6-carboxylysine (Lys222). Substrate is bound at residue His224. Residues His251 and His277 each coordinate Ni(2+). His325 functions as the Proton donor in the catalytic mechanism. Asp365 serves as a coordination point for Ni(2+).

The protein belongs to the metallo-dependent hydrolases superfamily. Urease alpha subunit family. Heterotrimer of UreA (gamma), UreB (beta) and UreC (alpha) subunits. Three heterotrimers associate to form the active enzyme. It depends on Ni cation as a cofactor. Carboxylation allows a single lysine to coordinate two nickel ions.

The protein resides in the cytoplasm. The catalysed reaction is urea + 2 H2O + H(+) = hydrogencarbonate + 2 NH4(+). It participates in nitrogen metabolism; urea degradation; CO(2) and NH(3) from urea (urease route): step 1/1. The sequence is that of Urease subunit alpha from Yersinia enterocolitica serotype O:8 / biotype 1B (strain NCTC 13174 / 8081).